Reading from the N-terminus, the 553-residue chain is Fusion glycoprotein F0 (553 aa).

The first 31 residues, 1-31 (MGPRPSTKNPTPMMLTVRVALVLSCICPANS), serve as a signal peptide directing secretion. Residues 32-500 (IDGRPLAAAG…VNVKLTSTSA (469 aa)) are Extracellular-facing. 3 disulfides stabilise this stretch: cysteine 76/cysteine 199, cysteine 338/cysteine 347, and cysteine 362/cysteine 370. N-linked (GlcNAc...) asparagine; by host glycosylation occurs at asparagine 85. The tract at residues 117–141 (FIGAIIGGVALGVATAAQITAAAAL) is fusion peptide. Residues 142 to 170 (IQAKQNAANILRLKESIAATNEAVHEVTD) are a coiled coil. N-linked (GlcNAc...) asparagine; by host glycosylation is present at asparagine 191. N-linked (GlcNAc...) asparagine; by host glycosylation is found at asparagine 366, asparagine 447, and asparagine 471. Residues 466-491 (ELGNVNNSISNALNKLEESNSKLDKV) adopt a coiled-coil conformation. Residues 501 to 521 (LITYIVLTIISLVFGILSLVL) form a helical membrane-spanning segment. Over 522 to 553 (ACYLMYKQKAQQKTLLWLGNNTLDQMRATTKM) the chain is Cytoplasmic. Cysteine 523 carries S-palmitoyl cysteine; by host lipidation.

The protein belongs to the paramyxoviruses fusion glycoprotein family. As to quaternary structure, homotrimer of disulfide-linked F1-F2. Post-translationally, the inactive precursor F0 is glycosylated and proteolytically cleaved into F1 and F2 to be functionally active. The cleavage is mediated by cellular proteases during the transport and maturation of the polypeptide.

The protein localises to the virion membrane. It is found in the host cell membrane. Its function is as follows. Class I viral fusion protein. Under the current model, the protein has at least 3 conformational states: pre-fusion native state, pre-hairpin intermediate state, and post-fusion hairpin state. During viral and plasma cell membrane fusion, the heptad repeat (HR) regions assume a trimer-of-hairpins structure, positioning the fusion peptide in close proximity to the C-terminal region of the ectodomain. The formation of this structure appears to drive apposition and subsequent fusion of viral and plasma cell membranes. Directs fusion of viral and cellular membranes leading to delivery of the nucleocapsid into the cytoplasm. This fusion is pH independent and occurs directly at the outer cell membrane. The trimer of F1-F2 (F protein) probably interacts with HN at the virion surface. Upon HN binding to its cellular receptor, the hydrophobic fusion peptide is unmasked and interacts with the cellular membrane, inducing the fusion between cell and virion membranes. Later in infection, F proteins expressed at the plasma membrane of infected cells could mediate fusion with adjacent cells to form syncytia, a cytopathic effect that could lead to tissue necrosis. This chain is Fusion glycoprotein F0 (F), found in Gallus gallus (Chicken).